A 433-amino-acid polypeptide reads, in one-letter code: B3 domain-containing protein Os04g0676600 (433 aa).

Disordered regions lie at residues 1 to 29 (MADT…GGGQ) and 216 to 283 (FPPV…NSAN). A compositionally biased stretch (basic and acidic residues) spans 13–24 (GDDRGREGHDDF). Residues 216–229 (FPPVSSSSRSFSSA) show a composition bias toward low complexity. Basic and acidic residues predominate over residues 237–265 (DAKKAKKSDIKDQPIVLRRSDTESEKNDE). Polar residues predominate over residues 269 to 283 (TPASEPSSMSHNSAN). A DNA-binding region (TF-B3) is located at residues 297–399 (LRKELTNSDV…KLVVRGEKAI (103 aa)).

It localises to the nucleus. Functionally, probable transcription regulator that binds specifically to the DNA sequence 5'-CATGC-3' of the IDE1 element found in the promoter of the barley iron deficiency-inducible gene IDS2. The sequence is that of B3 domain-containing protein Os04g0676600 from Oryza sativa subsp. japonica (Rice).